The following is a 96-amino-acid chain: Co-chaperonin GroES (96 aa).

It belongs to the GroES chaperonin family. In terms of assembly, heptamer of 7 subunits arranged in a ring. Interacts with the chaperonin GroEL.

It localises to the cytoplasm. In terms of biological role, together with the chaperonin GroEL, plays an essential role in assisting protein folding. The GroEL-GroES system forms a nano-cage that allows encapsulation of the non-native substrate proteins and provides a physical environment optimized to promote and accelerate protein folding. GroES binds to the apical surface of the GroEL ring, thereby capping the opening of the GroEL channel. The chain is Co-chaperonin GroES from Polaromonas naphthalenivorans (strain CJ2).